The primary structure comprises 510 residues: Archaeal glutamate synthase [NADPH] (510 aa).

2 consecutive 4Fe-4S ferredoxin-type domains span residues Y10–E37 and G38–N68. [4Fe-4S] cluster-binding residues include C19, C22, C25, C29, C48, C51, C54, and C58.

It belongs to the glutamate synthase family. FMN is required as a cofactor.

The catalysed reaction is 2 L-glutamate + NADP(+) = L-glutamine + 2-oxoglutarate + NADPH + H(+). The chain is Archaeal glutamate synthase [NADPH] from Methanocaldococcus jannaschii (strain ATCC 43067 / DSM 2661 / JAL-1 / JCM 10045 / NBRC 100440) (Methanococcus jannaschii).